Here is a 239-residue protein sequence, read N- to C-terminus: Prolyl hydroxylase EGLN3 (239 aa).

The beta(2)beta(3) 'finger-like' loop stretch occupies residues 62–73 (AGPRAGVSKRHL). The required for interaction with ADRB2 stretch occupies residues 88 to 104 (CEAINFLLSLIDRLVLY). Residues 116–214 (ERSKAMVACY…RYAMTVWYFD (99 aa)) enclose the Fe2OG dioxygenase domain. Fe cation is bound by residues histidine 135, aspartate 137, and histidine 196. Arginine 205 contributes to the 2-oxoglutarate binding site.

As to quaternary structure, interacts with ADRB2; the interaction hydroxylates ADRB2 facilitating its ubiquitination by the VHL-E3 ligase complex. Interacts with PAX2; the interaction targets PAX2 for destruction. Interacts with PKM; the interaction hydroxylates PKM in hypoxia. Interacts with WDR83; the interaction leads to almost complete elimination of HIF-mediated reporter activity. Interacts with BCL2 (via its BH4 domain); the interaction disrupts the BAX-BCL4 complex inhibiting the anti-apoptotic activity of BCL2. Fe(2+) serves as cofactor. Requires L-ascorbate as cofactor. In terms of processing, ubiquitinated by SIAH1 and/or SIAH2 in response to the unfolded protein response (UPR), leading to its degradation. Highly expressed in vascular smooth muscle. Moderately expressed in esophagus, stomach, small bowel and aorta. Low levels in tail and kidney. Expression also in pheochromocytoma cell line PC-12.

The protein resides in the nucleus. It is found in the cytoplasm. It catalyses the reaction L-prolyl-[protein] + 2-oxoglutarate + O2 = trans-4-hydroxy-L-prolyl-[protein] + succinate + CO2. The enzyme catalyses L-prolyl-[hypoxia-inducible factor alpha subunit] + 2-oxoglutarate + O2 = trans-4-hydroxy-L-prolyl-[hypoxia-inducible factor alpha subunit] + succinate + CO2. Its function is as follows. Prolyl hydroxylase that mediates hydroxylation of proline residues in target proteins, such as PKM, TELO2, ATF4 and HIF1A. Target proteins are preferentially recognized via a LXXLAP motif. Cellular oxygen sensor that catalyzes, under normoxic conditions, the post-translational formation of 4-hydroxyproline in hypoxia-inducible factor (HIF) alpha proteins. Hydroxylates a specific proline found in each of the oxygen-dependent degradation (ODD) domains (N-terminal, NODD, and C-terminal, CODD) of HIF1A. Also hydroxylates HIF2A. Has a preference for the CODD site for both HIF1A and HIF2A. Hydroxylation on the NODD site by EGLN3 appears to require prior hydroxylation on the CODD site. Hydroxylated HIFs are then targeted for proteasomal degradation via the von Hippel-Lindau ubiquitination complex. Under hypoxic conditions, the hydroxylation reaction is attenuated allowing HIFs to escape degradation resulting in their translocation to the nucleus, heterodimerization with HIF1B, and increased expression of hypoxy-inducible genes. ELGN3 is the most important isozyme in limiting physiological activation of HIFs (particularly HIF2A) in hypoxia. Also hydroxylates PKM in hypoxia, limiting glycolysis. Under normoxia, hydroxylates and regulates the stability of ADRB2. Regulator of cardiomyocyte and neuronal apoptosis. In cardiomyocytes, inhibits the anti-apoptotic effect of BCL2 by disrupting the BAX-BCL2 complex. In neurons, has a NGF-induced proapoptotic effect, probably through regulating CASP3 activity. Also essential for hypoxic regulation of neutrophilic inflammation. Plays a crucial role in DNA damage response (DDR) by hydroxylating TELO2, promoting its interaction with ATR which is required for activation of the ATR/CHK1/p53 pathway. Also mediates hydroxylation of ATF4, leading to decreased protein stability of ATF4. This is Prolyl hydroxylase EGLN3 (Egln3) from Rattus norvegicus (Rat).